The chain runs to 734 residues: Photosystem I P700 chlorophyll a apoprotein A2 (734 aa).

The next 8 helical transmembrane spans lie at 46–69 (IFAS…FHVA), 135–158 (LYVG…LHLQ), 175–199 (LNHH…HVAI), 273–291 (MAHH…GHMY), 330–353 (LHFQ…QHMY), 369–395 (ASLY…IFFV), 417–439 (AIIS…LYVH), and 517–535 (FLVH…LILV). The [4Fe-4S] cluster site is built by Cys559 and Cys568. 2 helical membrane passes run 575–596 (AFYL…YFHW) and 643–665 (LSVW…MFLI). Residues His654, Met662, and Tyr670 each coordinate chlorophyll a. Trp671 provides a ligand contact to phylloquinone. Residues 707–727 (LVGLTHFSVGYVLTYAAFLIA) traverse the membrane as a helical segment.

It belongs to the PsaA/PsaB family. As to quaternary structure, the PsaA/B heterodimer binds the P700 chlorophyll special pair and subsequent electron acceptors. PSI consists of a core antenna complex that captures photons, and an electron transfer chain that converts photonic excitation into a charge separation. The eukaryotic PSI reaction center is composed of at least 11 subunits. Requires P700 is a chlorophyll a/chlorophyll a' dimer, A0 is one or more chlorophyll a, A1 is one or both phylloquinones and FX is a shared 4Fe-4S iron-sulfur center. as cofactor.

It localises to the plastid. It is found in the chloroplast thylakoid membrane. The enzyme catalyses reduced [plastocyanin] + hnu + oxidized [2Fe-2S]-[ferredoxin] = oxidized [plastocyanin] + reduced [2Fe-2S]-[ferredoxin]. Functionally, psaA and PsaB bind P700, the primary electron donor of photosystem I (PSI), as well as the electron acceptors A0, A1 and FX. PSI is a plastocyanin/cytochrome c6-ferredoxin oxidoreductase, converting photonic excitation into a charge separation, which transfers an electron from the donor P700 chlorophyll pair to the spectroscopically characterized acceptors A0, A1, FX, FA and FB in turn. Oxidized P700 is reduced on the lumenal side of the thylakoid membrane by plastocyanin or cytochrome c6. This is Photosystem I P700 chlorophyll a apoprotein A2 from Chlorella vulgaris (Green alga).